The chain runs to 227 residues: UPF0758 protein SSA_1218 (227 aa).

In terms of domain architecture, MPN spans 104-226 (QIMGSQKLAR…YYSYREETDM (123 aa)). Zn(2+)-binding residues include histidine 175, histidine 177, and aspartate 188. A JAMM motif motif is present at residues 175–188 (HNHPSGSVVPSRND).

The protein belongs to the UPF0758 family.

The protein is UPF0758 protein SSA_1218 of Streptococcus sanguinis (strain SK36).